Consider the following 293-residue polypeptide: Nucleotide-binding protein BcerKBAB4_4948 (293 aa).

Position 14–21 (14–21) interacts with ATP; the sequence is GMSGAGKT. 65-68 is a binding site for GTP; the sequence is DLRG.

Belongs to the RapZ-like family.

Displays ATPase and GTPase activities. This Bacillus mycoides (strain KBAB4) (Bacillus weihenstephanensis) protein is Nucleotide-binding protein BcerKBAB4_4948.